A 199-amino-acid polypeptide reads, in one-letter code: dITP/XTP pyrophosphatase (199 aa).

8–13 (SGNAGK) contacts substrate. The active-site Proton acceptor is D69. D69 is a Mg(2+) binding site. Residues S70, 154-157 (FGYN), K177, and 182-183 (HR) contribute to the substrate site.

It belongs to the HAM1 NTPase family. Homodimer. The cofactor is Mg(2+).

The catalysed reaction is XTP + H2O = XMP + diphosphate + H(+). It carries out the reaction dITP + H2O = dIMP + diphosphate + H(+). It catalyses the reaction ITP + H2O = IMP + diphosphate + H(+). Functionally, pyrophosphatase that catalyzes the hydrolysis of nucleoside triphosphates to their monophosphate derivatives, with a high preference for the non-canonical purine nucleotides XTP (xanthosine triphosphate), dITP (deoxyinosine triphosphate) and ITP. Seems to function as a house-cleaning enzyme that removes non-canonical purine nucleotides from the nucleotide pool, thus preventing their incorporation into DNA/RNA and avoiding chromosomal lesions. The sequence is that of dITP/XTP pyrophosphatase from Xanthomonas axonopodis pv. citri (strain 306).